Reading from the N-terminus, the 115-residue chain is MTDSILKCTTRHIRIFTARCENNDLVQDSEHLTLDLDPDNEFIWEELVIGKVHKRFSELVDSYSGKDLSDYNLRKIGSDLEGTIRQLLQAGELKYNPDCRVLNYSMGLPRTKDLL.

It belongs to the complex I NdhM subunit family. NDH-1 can be composed of about 15 different subunits; different subcomplexes with different compositions have been identified which probably have different functions.

It localises to the cellular thylakoid membrane. The enzyme catalyses a plastoquinone + NADH + (n+1) H(+)(in) = a plastoquinol + NAD(+) + n H(+)(out). The catalysed reaction is a plastoquinone + NADPH + (n+1) H(+)(in) = a plastoquinol + NADP(+) + n H(+)(out). NDH-1 shuttles electrons from an unknown electron donor, via FMN and iron-sulfur (Fe-S) centers, to quinones in the respiratory and/or the photosynthetic chain. The immediate electron acceptor for the enzyme in this species is believed to be plastoquinone. Couples the redox reaction to proton translocation, and thus conserves the redox energy in a proton gradient. Cyanobacterial NDH-1 also plays a role in inorganic carbon-concentration. The protein is NAD(P)H-quinone oxidoreductase subunit M of Prochlorococcus marinus (strain MIT 9211).